Reading from the N-terminus, the 526-residue chain is Dolichyl pyrophosphate Glc1Man9GlcNAc2 alpha-1,3-glucosyltransferase (526 aa).

The next 11 membrane-spanning stretches (helical) occupy residues Phe-4–Leu-24, Leu-103–His-122, Phe-143–Phe-163, Gly-188–Ala-208, Leu-238–Ala-258, Pro-334–Cys-354, Leu-368–Ala-388, Val-389–Leu-409, Leu-427–Phe-449, Thr-461–Thr-481, and Pro-488–Leu-508.

Belongs to the ALG6/ALG8 glucosyltransferase family.

Its subcellular location is the endoplasmic reticulum membrane. The enzyme catalyses an alpha-D-Glc-(1-&gt;3)-alpha-D-Man-(1-&gt;2)-alpha-D-Man-(1-&gt;2)-alpha-D-Man-(1-&gt;3)-[alpha-D-Man-(1-&gt;2)-alpha-D-Man-(1-&gt;3)-[alpha-D-Man-(1-&gt;2)-alpha-D-Man-(1-&gt;6)]-alpha-D-Man-(1-&gt;6)]-beta-D-Man-(1-&gt;4)-beta-D-GlcNAc-(1-&gt;4)-alpha-D-GlcNAc-diphospho-di-trans,poly-cis-dolichol + a di-trans,poly-cis-dolichyl beta-D-glucosyl phosphate = an alpha-D-Glc-(1-&gt;3)-alpha-D-Glc-(1-&gt;3)-alpha-D-Man-(1-&gt;2)-alpha-D-Man-(1-&gt;2)-alpha-D-Man-(1-&gt;3)-[alpha-D-Man-(1-&gt;2)-alpha-D-Man-(1-&gt;3)-[alpha-D-Man-(1-&gt;2)-alpha-D-Man-(1-&gt;6)]-alpha-D-Man-(1-&gt;6)]-beta-D-Man-(1-&gt;4)-beta-D-GlcNAc-(1-&gt;4)-alpha-D-GlcNAc-diphospho-di-trans,poly-cis-dolichol + a di-trans,poly-cis-dolichyl phosphate + H(+). It functions in the pathway protein modification; protein glycosylation. In terms of biological role, dolichyl pyrophosphate Glc1Man9GlcNAc2 alpha-1,3-glucosyltransferase that operates in the biosynthetic pathway of dolichol-linked oligosaccharides, the glycan precursors employed in protein asparagine (N)-glycosylation. The assembly of dolichol-linked oligosaccharides begins on the cytosolic side of the endoplasmic reticulum membrane and finishes in its lumen. The sequential addition of sugars to dolichol pyrophosphate produces dolichol-linked oligosaccharides containing fourteen sugars, including two GlcNAcs, nine mannoses and three glucoses. Once assembled, the oligosaccharide is transferred from the lipid to nascent proteins by oligosaccharyltransferases. In the lumen of the endoplasmic reticulum, adds the second glucose residue from dolichyl phosphate glucose (Dol-P-Glc) onto the lipid-linked oligosaccharide intermediate Glc(1)Man(9)GlcNAc(2)-PP-Dol to produce Glc(2)Man(9)GlcNAc(2)-PP-Dol. Glc(2)Man(9)GlcNAc(2)-PP-Dol is a substrate for ALG10, the following enzyme in the biosynthetic pathway. Required for PKD1/Polycystin-1 maturation and localization to the plasma membrane of the primary cilia. This is Dolichyl pyrophosphate Glc1Man9GlcNAc2 alpha-1,3-glucosyltransferase from Bos taurus (Bovine).